Reading from the N-terminus, the 75-residue chain is Putative antitoxin PH1062.1 (75 aa).

Belongs to the UPF0330 family.

Functionally, possibly the antitoxin component of a type II toxin-antitoxin (TA) system. The sequence is that of Putative antitoxin PH1062.1 from Pyrococcus horikoshii (strain ATCC 700860 / DSM 12428 / JCM 9974 / NBRC 100139 / OT-3).